The sequence spans 305 residues: Peroxisome biogenesis factor 2 (305 aa).

The Peroxisomal matrix portion of the chain corresponds to 1 to 15 (MAAREESTQSANRVL). The chain crosses the membrane as a helical span at residues 16–42 (RISQLDALELNKALEQLVWSQFTQCFH). Residues 43 to 48 (GFKPGL) lie on the Cytoplasmic side of the membrane. Residues 49-74 (LARFEPEVKAFLWLFLWRFTIYSKNA) form a helical membrane-spanning segment. Residues 75–98 (TVGQSVLNIQHKNDSSPNPVYQPP) lie on the Peroxisomal matrix side of the membrane. Residues 99 to 125 (SKNQKLLYAVCTIGGRWLEERCYDLFR) traverse the membrane as a helical segment. Residues 126–133 (NRHLASFG) are Cytoplasmic-facing. A helical membrane pass occupies residues 134-160 (KAKQCMNFVVGLLKLGELMNFLIFLQK). At 161–187 (GKFATLTERLLGIHSVFCKPQNMREVG) the chain is on the peroxisomal matrix side. Residues 188–211 (FEYMNRELLWHGFAEFLIFLLPLI) form a helical membrane-spanning segment. At 212-305 (NIQKLKAKLS…GIQMSEVNAL (94 aa)) the chain is on the cytoplasmic side. Cysteine 244, cysteine 247, cysteine 259, histidine 261, cysteine 264, cysteine 267, cysteine 280, and cysteine 283 together coordinate Zn(2+). Residues 244–284 (CALCGEWPTMPHTIGCEHVFCYYCVKSSFLFDIYFTCPKCG) form an RING-type zinc finger.

This sequence belongs to the pex2/pex10/pex12 family. Component of the PEX2-PEX10-PEX12 retrotranslocation channel, composed of PEX2, PEX10 and PEX12. Post-translationally, forms intramolecular and intermolecular disulfide bonds in response to reactive oxygen species (ROS), promoting higher stability.

It localises to the peroxisome membrane. It carries out the reaction [E2 ubiquitin-conjugating enzyme]-S-ubiquitinyl-L-cysteine + [acceptor protein]-L-cysteine = [E2 ubiquitin-conjugating enzyme]-L-cysteine + [acceptor protein]-S-ubiquitinyl-L-cysteine.. It catalyses the reaction S-ubiquitinyl-[E2 ubiquitin-conjugating enzyme]-L-cysteine + [acceptor protein]-L-lysine = [E2 ubiquitin-conjugating enzyme]-L-cysteine + N(6)-ubiquitinyl-[acceptor protein]-L-lysine.. It participates in protein modification; protein ubiquitination. E3 ubiquitin-protein ligase component of a retrotranslocation channel required for peroxisome organization by mediating export of the PEX5 receptor from peroxisomes to the cytosol, thereby promoting PEX5 recycling. The retrotranslocation channel is composed of PEX2, PEX10 and PEX12; each subunit contributing transmembrane segments that coassemble into an open channel that specifically allows the passage of PEX5 through the peroxisomal membrane. PEX2 also regulates peroxisome organization by acting as a E3 ubiquitin-protein ligase. PEX2 ubiquitinates PEX5 during its passage through the retrotranslocation channel: catalyzes monoubiquitination of PEX5 at 'Cys-11', a modification that acts as a signal for PEX5 extraction into the cytosol. Required for pexophagy in response to starvation by mediating ubiquitination of peroxisomal proteins, such as PEX5 and ABCD3/PMP70. Also involved in the response to reactive oxygen species (ROS) by mediating 'Lys-48'-linked polyubiquitination and subsequent degradation of PNPLA2/ATGL, thereby regulating lipolysis. The polypeptide is Peroxisome biogenesis factor 2 (Mus musculus (Mouse)).